The sequence spans 651 residues: MSKIIELPEVLANQIAAGEVIERPASVVKELVENAIDADSSQITIEIEESGLKKIQVTDNGQGIEQADVIMSLRRHATSKIKKQSDLFRIRTLGFRGEALPSIASISRLTLKTATKGEIYGTLLIANGGKIEKEEAISTPIGTKVSVENLFFNTPARLKYMKSLQAELAHIIDVINRLSLAHPEIAFTLINDGRELTKTAGKGDLRQALAGIYGVTIAKKMVEISNADLDFEVSGYISLPELTRANRNYITILINGRYIKNFLLNRAILDGYGSKLMVGRFPIAVIDIQIDPYLADVNVHPTKQEVRISKEKELMNLVSSAIADSLREQELIPDALENLAKTSTNKKQKFEQTQLPLKQSNLYYDKTQNDFFLKETTVSEASSEFTVVDKAVNITDNVSGHSSVKYAQRQMRTCENKEHPSLTMTDKQQKRQLSRIVESLENEEKSTFPELEYFGQMHGTYLFAQGEGGLYIIDQHAAQERVKYEYYRDKIGEVDNSLQQLLVPYLFEFPANDFMTLQEKMSILNEVGIHLENYGENTFILREHPIWLQEKEIESAVYEMCDMLLLTNEVSIKKYRAELAIMMSCKRSIKANHTLDDYSARNLLIQLSQCKNPYNCPHGRPVLVNFTKADMEKMFRRIQENHTSLRELGKY.

Belongs to the DNA mismatch repair MutL/HexB family.

Functionally, this protein is involved in the repair of mismatches in DNA. It is required for dam-dependent methyl-directed DNA mismatch repair. May act as a 'molecular matchmaker', a protein that promotes the formation of a stable complex between two or more DNA-binding proteins in an ATP-dependent manner without itself being part of a final effector complex. This Streptococcus mutans serotype c (strain ATCC 700610 / UA159) protein is DNA mismatch repair protein MutL.